Consider the following 229-residue polypeptide: Cytidylate kinase (229 aa).

Position 12–20 (12–20 (GPSGSGKGT)) interacts with ATP.

It belongs to the cytidylate kinase family. Type 1 subfamily.

It localises to the cytoplasm. The catalysed reaction is CMP + ATP = CDP + ADP. It catalyses the reaction dCMP + ATP = dCDP + ADP. The chain is Cytidylate kinase from Pseudomonas fluorescens (strain Pf0-1).